The chain runs to 366 residues: MRTDLFDFDLPAERIALRPASPRDSAKMLVVEGGALRDRTISELPQWLKRGDQLVVNDTKVIAAQLKGRRIGRETEPKIEATLIKRLDGSRWQALVKPAKKLIAGDRIRFGNEGKVCLLGHLDAEVEAKGSEGEVTLSFSFHGPALDQAIADLGSPPLPPYIASKRTPDDQDFADYQTMFAANEGAVAAPTAGLHFTPALEQALRERGVGLNRVTLHVGAGTFLPVKVEDTAGHKMHAEWGTISAETAERLNIARHNGGRIIAVGTTSLRLLESAASEDGTIQPFAAETSIFITPGYRFRAVDILLTNFHLPKSTLFMLVSAFSGLETMRRAYAHAIAQGYRFYSYGDACLLFRAGGTEVHDPSPP.

The protein belongs to the QueA family. Monomer.

Its subcellular location is the cytoplasm. The enzyme catalyses 7-aminomethyl-7-carbaguanosine(34) in tRNA + S-adenosyl-L-methionine = epoxyqueuosine(34) in tRNA + adenine + L-methionine + 2 H(+). Its pathway is tRNA modification; tRNA-queuosine biosynthesis. Functionally, transfers and isomerizes the ribose moiety from AdoMet to the 7-aminomethyl group of 7-deazaguanine (preQ1-tRNA) to give epoxyqueuosine (oQ-tRNA). The protein is S-adenosylmethionine:tRNA ribosyltransferase-isomerase of Bradyrhizobium diazoefficiens (strain JCM 10833 / BCRC 13528 / IAM 13628 / NBRC 14792 / USDA 110).